Consider the following 726-residue polypeptide: Catalase-peroxidase (726 aa).

The segment at residues 85-208 (WHSAGSYRIH…FAATEMGLIY (124 aa)) is a cross-link (tryptophyl-tyrosyl-methioninium (Trp-Tyr) (with M-234)). Catalysis depends on His-86, which acts as the Proton acceptor. The segment at residues 208 to 234 (YVNPEGPMGNPDPSGSAKEIRLAFTRM) is a cross-link (tryptophyl-tyrosyl-methioninium (Tyr-Met) (with W-85)). Residue His-249 participates in heme b binding.

This sequence belongs to the peroxidase family. Peroxidase/catalase subfamily. In terms of assembly, homodimer or homotetramer. It depends on heme b as a cofactor. Formation of the three residue Trp-Tyr-Met cross-link is important for the catalase, but not the peroxidase activity of the enzyme.

The catalysed reaction is H2O2 + AH2 = A + 2 H2O. The enzyme catalyses 2 H2O2 = O2 + 2 H2O. Its function is as follows. Bifunctional enzyme with both catalase and broad-spectrum peroxidase activity. This chain is Catalase-peroxidase, found in Pseudothermotoga lettingae (strain ATCC BAA-301 / DSM 14385 / NBRC 107922 / TMO) (Thermotoga lettingae).